Reading from the N-terminus, the 638-residue chain is Octopamine receptor 1 (638 aa).

The Extracellular portion of the chain corresponds to 1 to 28 (MSRDIFMKRLRLHLLFDEVAMVTHIVGD). Residues 29–53 (VLSSVLLCAVVLLVLVGNTLVVAAV) form a helical membrane-spanning segment. The Cytoplasmic segment spans residues 54–64 (ATSRKLRTVTN). A helical transmembrane segment spans residues 65-87 (VFIVNLACADLLLGVLVLPFSAV). Residues 88-102 (NEIKDVWIFGHVWCQ) lie on the Extracellular side of the membrane. A disulfide bond links Cys-101 and Cys-230. Residues 103 to 124 (VWLAVDVWLCTASILNLCCISL) form a helical membrane-spanning segment. Residues 125-147 (DRYLAITRPIRYPGLMSAKRAKT) are Cytoplasmic-facing. The helical transmembrane segment at 148-167 (LVAGVWLFSFVICCPPLIGW) threads the bilayer. At 168 to 239 (NDGGDGIMDY…CELTNSRGYR (72 aa)) the chain is on the extracellular side. Asn-178, Asn-207, and Asn-215 each carry an N-linked (GlcNAc...) asparagine glycan. A helical transmembrane segment spans residues 240 to 259 (IYAALGSFFIPMLVMVFFYL). Topologically, residues 260–520 (QIYRAAVKTI…FNREKKAAKT (261 aa)) are cytoplasmic. A helical transmembrane segment spans residues 521 to 545 (LAIIVGAFIMCWMPFFTIYLVGAFC). At 546-551 (ENCISP) the chain is on the extracellular side. The chain crosses the membrane as a helical span at residues 552 to 575 (IVFSVAFWLGYCNSAMNPCVYALF). Topologically, residues 576-638 (SRDFRFAFRK…TASGGNGGYT (63 aa)) are cytoplasmic. The segment at 618-638 (DDAKSSSDIGPTASGGNGGYT) is disordered.

This sequence belongs to the G-protein coupled receptor 1 family. As to expression, expressed in the central nervous system.

It localises to the cell membrane. In terms of biological role, G-protein coupled receptor for octopamine (OA), which is a neurotransmitter, neurohormone, and neuromodulator in invertebrates. Activation of this receptor by octopamine induces an increase in both inositol phosphates and cyclic AMP. The coupling to adenylyl cyclase seems to be less efficient than the coupling to phospholipase C. The rank order of potency for agonists is p-synephrine &gt;= clonidine &gt; p-octopamine = xylometazoline = phenylephrine = oxymetazoline &gt; B-HT920 &gt; serotonin = p-tyramine &gt; epinephrine &gt; norepinephrine &gt; methoxamine = dopamine = histamine. For antagonists, the rank order is yohimbine &gt; chlopromazine / spiperone &gt; phentolamine &gt; mianserine &gt; rauwolscine &gt; prazosin &gt; alprenolol / propanolol &gt; pindolol. The polypeptide is Octopamine receptor 1 (Lymnaea stagnalis (Great pond snail)).